Here is a 406-residue protein sequence, read N- to C-terminus: Proteasome-activating nucleotidase 1 (406 aa).

The stretch at 13–72 forms a coiled coil; the sequence is YDKDSASQQEKITALQERLEVLETQNEEMRDKLLDTNAENNKYQQKLERLTHENKKLKQS. ATP is bound by residues 194–199 and His333; that span reads GTGKTM. The tract at residues 404–406 is docks into pockets in the proteasome alpha-ring to cause gate opening; the sequence is AFA.

Belongs to the AAA ATPase family. In terms of assembly, homododecamer, in a proposed two stacked hexameric ring configuration, but may also form homohexamer. The hexameric complex has likely a two-ring architecture resembling a top hat that caps the 20S proteasome core at one or both ends. Upon ATP-binding, the C-terminus of PAN probably interacts with the alpha-rings of the proteasome core by binding to the intersubunit pockets. Interacts with SAMP1-MoaE conjugate in vitro, but does not bind to SAMP1 or MoaE alone. Interacts with NcsA.

It localises to the cytoplasm. ATPase activity is inhibited by EDTA in vitro. Functionally, ATPase which is responsible for recognizing, binding, unfolding and translocation of substrate proteins into the archaeal 20S proteasome core particle. Is essential for opening the gate of the 20S proteasome via an interaction with its C-terminus, thereby allowing substrate entry and access to the site of proteolysis. Thus, the C-terminus of the proteasomal ATPase functions like a 'key in a lock' to induce gate opening and therefore regulate proteolysis. Unfolding activity requires energy from ATP hydrolysis, whereas ATP binding alone promotes ATPase-20S proteasome association which triggers gate opening, and supports translocation of unfolded substrates. Is also able to cleave other nucleoside triphosphates including GTP and TTP, but the rate of hydrolysis is 4- to 5-fold slower than for ATP. This is Proteasome-activating nucleotidase 1 from Haloferax volcanii (strain ATCC 29605 / DSM 3757 / JCM 8879 / NBRC 14742 / NCIMB 2012 / VKM B-1768 / DS2) (Halobacterium volcanii).